The chain runs to 458 residues: Chromosomal replication initiator protein DnaA (458 aa).

Residues 1–84 are domain I, interacts with DnaA modulators; sequence MENIWLEAQT…FHVAEEKPEA (84 aa). Over residues 80–119 the composition is skewed to basic and acidic residues; sequence EKPEAAHEAKPEKEAKPAREKERDKDKEKEKDREKEKKEL. The interval 80–120 is disordered; the sequence is EKPEAAHEAKPEKEAKPAREKERDKDKEKEKDREKEKKELV. Positions 84–121 are domain II; it reads AAHEAKPEKEAKPAREKERDKDKEKEKDREKEKKELVP. The tract at residues 122 to 338 is domain III, AAA+ region; sequence NLNPKYTFES…GMLIRLEAFA (217 aa). Residues Gly166, Gly168, Lys169, and Thr170 each coordinate ATP. The segment at 339-458 is domain IV, binds dsDNA; the sequence is SLTGQEITLS…VEDIRKKLFT (120 aa).

This sequence belongs to the DnaA family. Oligomerizes as a right-handed, spiral filament on DNA at oriC.

The protein localises to the cytoplasm. Functionally, plays an essential role in the initiation and regulation of chromosomal replication. ATP-DnaA binds to the origin of replication (oriC) to initiate formation of the DNA replication initiation complex once per cell cycle. Binds the DnaA box (a 9 base pair repeat at the origin) and separates the double-stranded (ds)DNA. Forms a right-handed helical filament on oriC DNA; dsDNA binds to the exterior of the filament while single-stranded (ss)DNA is stabiized in the filament's interior. The ATP-DnaA-oriC complex binds and stabilizes one strand of the AT-rich DNA unwinding element (DUE), permitting loading of DNA polymerase. After initiation quickly degrades to an ADP-DnaA complex that is not apt for DNA replication. Binds acidic phospholipids. The chain is Chromosomal replication initiator protein DnaA from Citrifermentans bemidjiense (strain ATCC BAA-1014 / DSM 16622 / JCM 12645 / Bem) (Geobacter bemidjiensis).